The chain runs to 66 residues: Alpha-like toxin BmK-M7 (66 aa).

Residues 2-64 (RDGYIALPHN…VPIRVPGRCH (63 aa)) form the LCN-type CS-alpha/beta domain. 4 cysteine pairs are disulfide-bonded: Cys12/Cys63, Cys16/Cys36, Cys22/Cys46, and Cys26/Cys48.

The protein belongs to the long (4 C-C) scorpion toxin superfamily. Sodium channel inhibitor family. Alpha subfamily. In terms of tissue distribution, expressed by the venom gland.

It is found in the secreted. Alpha toxins bind voltage-independently at site-3 of sodium channels (Nav) and inhibit the inactivation of the activated channels, thereby blocking neuronal transmission. This toxin is active on both mammals and insects. It can be considered as a cardiotoxin, as it can bind to human cardiac sodium channel and modify its normal properties. The protein is Alpha-like toxin BmK-M7 of Olivierus martensii (Manchurian scorpion).